The primary structure comprises 450 residues: Phosphoglucosamine mutase 2 (450 aa).

Ser-101 (phosphoserine intermediate) is an active-site residue. Mg(2+)-binding residues include Ser-101, Asp-245, Asp-247, and Asp-249. Ser-101 is modified (phosphoserine).

Belongs to the phosphohexose mutase family. It depends on Mg(2+) as a cofactor. Post-translationally, activated by phosphorylation.

The catalysed reaction is alpha-D-glucosamine 1-phosphate = D-glucosamine 6-phosphate. Its function is as follows. Catalyzes the conversion of glucosamine-6-phosphate to glucosamine-1-phosphate. The polypeptide is Phosphoglucosamine mutase 2 (Shewanella sp. (strain MR-7)).